Reading from the N-terminus, the 872-residue chain is DNA mismatch repair protein MutS (872 aa).

622-629 (GPNMAGKS) lines the ATP pocket.

The protein belongs to the DNA mismatch repair MutS family.

In terms of biological role, this protein is involved in the repair of mismatches in DNA. It is possible that it carries out the mismatch recognition step. This protein has a weak ATPase activity. The protein is DNA mismatch repair protein MutS of Geobacter metallireducens (strain ATCC 53774 / DSM 7210 / GS-15).